Here is a 403-residue protein sequence, read N- to C-terminus: S-adenosylmethionine synthase (403 aa).

Histidine 17 is a binding site for ATP. Aspartate 19 lines the Mg(2+) pocket. Glutamate 45 is a K(+) binding site. L-methionine is bound by residues glutamate 58 and glutamine 104. The flexible loop stretch occupies residues 104-114; sequence QSSDIAQGVNT. Residues 179-181, 250-251, aspartate 259, 265-266, alanine 282, and lysine 286 contribute to the ATP site; these read DGK, KF, and RK. Aspartate 259 lines the L-methionine pocket. Lysine 290 lines the L-methionine pocket.

It belongs to the AdoMet synthase family. As to quaternary structure, homotetramer; dimer of dimers. The cofactor is Mg(2+). K(+) serves as cofactor.

Its subcellular location is the cytoplasm. It catalyses the reaction L-methionine + ATP + H2O = S-adenosyl-L-methionine + phosphate + diphosphate. It participates in amino-acid biosynthesis; S-adenosyl-L-methionine biosynthesis; S-adenosyl-L-methionine from L-methionine: step 1/1. Functionally, catalyzes the formation of S-adenosylmethionine (AdoMet) from methionine and ATP. The overall synthetic reaction is composed of two sequential steps, AdoMet formation and the subsequent tripolyphosphate hydrolysis which occurs prior to release of AdoMet from the enzyme. The polypeptide is S-adenosylmethionine synthase (Mycobacterium leprae (strain Br4923)).